Reading from the N-terminus, the 173-residue chain is Alpha-crystallin A chain (173 aa).

Position 1 is an N-acetylmethionine (Met1). The segment at 1 to 63 (MDVTIQHPWF…RTVLDSGISE (63 aa)) is required for complex formation with BFSP1 and BFSP2. Gln6 carries the post-translational modification Deamidated glutamine; partial. Residue Ser45 is modified to Phosphoserine. Deamidated glutamine; partial occurs at positions 50 and 90. The region spanning 52 to 162 (LFRTVLDSGI…SHSERAIPVS (111 aa)) is the sHSP domain. Position 99 is an N6-acetyllysine (Lys99). A Zn(2+)-binding site is contributed by His100. Asn101 is subject to Deamidated asparagine; partial. Positions 102 and 107 each coordinate Zn(2+). At Ser122 the chain carries Phosphoserine. Position 123 is a deamidated asparagine; partial (Asn123). Cysteines 131 and 142 form a disulfide. Gln147 carries the post-translational modification Deamidated glutamine; partial. The segment at 149–173 (GMDASHSERAIPVSREEKPSSAPSS) is disordered. A compositionally biased stretch (basic and acidic residues) spans 153–167 (SHSERAIPVSREEKP). His154 provides a ligand contact to Zn(2+). An O-linked (GlcNAc) serine glycan is attached at Ser162.

This sequence belongs to the small heat shock protein (HSP20) family. In terms of assembly, heteromer composed of three CRYAA and one CRYAB subunits. Inter-subunit bridging via zinc ions enhances stability, which is crucial as there is no protein turn over in the lens. Can also form homodimers and homotetramers (dimers of dimers) which serve as the building blocks of homooligomers. Within homooligomers, the zinc-binding motif is created from residues of 3 different molecules. His-100 and Glu-102 from one molecule are ligands of the zinc ion, and His-107 and His-154 residues from additional molecules complete the site with tetrahedral coordination geometry. Part of a complex required for lens intermediate filament formation composed of BFSP1, BFSP2 and CRYAA. Post-translationally, undergoes age-dependent proteolytical cleavage at the C-terminus.

The protein resides in the cytoplasm. It localises to the nucleus. Functionally, contributes to the transparency and refractive index of the lens. In its oxidized form (absence of intramolecular disulfide bond), acts as a chaperone, preventing aggregation of various proteins under a wide range of stress conditions. Required for the correct formation of lens intermediate filaments as part of a complex composed of BFSP1, BFSP2 and CRYAA. This is Alpha-crystallin A chain (CRYAA) from Loxodonta africana (African elephant).